A 62-amino-acid polypeptide reads, in one-letter code: DNA-directed RNA polymerase subunit Rpo10 (62 aa).

Zn(2+)-binding residues include cysteine 6, cysteine 9, cysteine 43, and cysteine 44.

The protein belongs to the archaeal Rpo10/eukaryotic RPB10 RNA polymerase subunit family. As to quaternary structure, part of the RNA polymerase complex. Requires Zn(2+) as cofactor.

It is found in the cytoplasm. The catalysed reaction is RNA(n) + a ribonucleoside 5'-triphosphate = RNA(n+1) + diphosphate. In terms of biological role, DNA-dependent RNA polymerase (RNAP) catalyzes the transcription of DNA into RNA using the four ribonucleoside triphosphates as substrates. This Methanocorpusculum labreanum (strain ATCC 43576 / DSM 4855 / Z) protein is DNA-directed RNA polymerase subunit Rpo10.